The chain runs to 99 residues: Large ribosomal subunit protein uL23 (99 aa).

The protein belongs to the universal ribosomal protein uL23 family. As to quaternary structure, part of the 50S ribosomal subunit. Contacts protein L29, and trigger factor when it is bound to the ribosome.

Its function is as follows. One of the early assembly proteins it binds 23S rRNA. One of the proteins that surrounds the polypeptide exit tunnel on the outside of the ribosome. Forms the main docking site for trigger factor binding to the ribosome. This is Large ribosomal subunit protein uL23 from Stutzerimonas stutzeri (strain A1501) (Pseudomonas stutzeri).